We begin with the raw amino-acid sequence, 314 residues long: 3'-5' exoribonuclease YhaM (314 aa).

Residues S22–V90 constitute a DNA-binding region (OB). The 117-residue stretch at H163–K279 folds into the HD domain.

It belongs to the YhaM family. Mn(2+) is required as a cofactor. Co(2+) serves as cofactor.

Its function is as follows. Shows a 3'-5' exoribonuclease activity as well as single-stranded DNA 3'-5'exonuclease activity. Plays a role in the secondary pathway of 23S rRNA 3' end maturation. The protein is 3'-5' exoribonuclease YhaM of Bacillus subtilis (strain 168).